An 860-amino-acid polypeptide reads, in one-letter code: Spindle and centriole-associated protein 1 (860 aa).

Disordered stretches follow at residues 127–150 (RKRT…GINQ), 172–201 (DDAG…HSNR), 230–250 (ATQS…AEDQ), and 294–332 (PLLA…TGSS). Composition is skewed to polar residues over residues 139–150 (PDSSQSHTGINQ), 190–200 (ELPNSLSQHSN), and 230–245 (ATQS…SSEL). Thr236 is subject to Phosphothreonine. The residue at position 240 (Ser240) is a Phosphoserine. Over residues 317–329 (SSSTASADRPSST) the composition is skewed to low complexity. Residues 383–439 (RYLKESEIQLRKEVETRQQLEQMLGDHRELIDALTAEILSLREENSTMQARLQQYMV) are a coiled coil. Residues 623–645 (PAFVSLSQPPCSSLPSTQQPRNP) form a disordered region. The span at 627 to 642 (SLSQPPCSSLPSTQQP) shows a compositional bias: low complexity. Ser648 carries the phosphoserine modification. The interval 693–718 (ITSSGGEQGDGLREPRKQGSASEVST) is disordered. Residues 729 to 757 (SSMEERIAELNRQSMEARSKLLQLIEQQK) are a coiled coil. Residues Ser765, Ser766, Ser769, and Ser824 each carry the phosphoserine modification. Positions 792–860 (GMEASESSKC…GWFALSAHIP (69 aa)) are disordered. Positions 804 to 824 (VSPVSGNSSRRSSGAISNSCS) are enriched in low complexity.

Interacts with CEP120.

Its subcellular location is the cytoplasm. The protein localises to the cytoskeleton. The protein resides in the microtubule organizing center. It localises to the centrosome. It is found in the centriole. Its subcellular location is the spindle. In terms of biological role, regulator required for centriole duplication, for proper bipolar spindle formation and chromosome congression in mitosis. The chain is Spindle and centriole-associated protein 1 (Spice1) from Mus musculus (Mouse).